Consider the following 165-residue polypeptide: Peptidyl-prolyl cis-trans isomerase-like 1 (165 aa).

Residues 3–157 enclose the PPIase cyclophilin-type domain; sequence EREEVILDTS…IVQKILYALN (155 aa).

The protein belongs to the cyclophilin-type PPIase family. PPIL1 subfamily.

The enzyme catalyses [protein]-peptidylproline (omega=180) = [protein]-peptidylproline (omega=0). Its function is as follows. PPIases accelerate the folding of proteins. It catalyzes the cis-trans isomerization of proline imidic peptide bonds in oligopeptides. The sequence is that of Peptidyl-prolyl cis-trans isomerase-like 1 (cyp3) from Rhizopus delemar (strain RA 99-880 / ATCC MYA-4621 / FGSC 9543 / NRRL 43880) (Mucormycosis agent).